The primary structure comprises 511 residues: Glucose-6-phosphate 1-dehydrogenase (511 aa).

Residues 29 to 36 (GASGDLAK), R63, and K164 contribute to the NADP(+) site. D-glucose 6-phosphate-binding positions include K164, 194 to 198 (HYLGK), E232, and D251. H256 serves as the catalytic Proton acceptor. K347 contacts NADP(+). K350 is a D-glucose 6-phosphate binding site. The NADP(+) site is built by K356, R360, and R382. Position 384 (Q384) interacts with D-glucose 6-phosphate. NADP(+) contacts are provided by residues 390–392 (YIK), 410–412 (DLT), and R477.

This sequence belongs to the glucose-6-phosphate dehydrogenase family.

It catalyses the reaction D-glucose 6-phosphate + NADP(+) = 6-phospho-D-glucono-1,5-lactone + NADPH + H(+). Its pathway is carbohydrate degradation; pentose phosphate pathway; D-ribulose 5-phosphate from D-glucose 6-phosphate (oxidative stage): step 1/3. Functionally, catalyzes the rate-limiting step of the oxidative pentose-phosphate pathway, which represents a route for the dissimilation of carbohydrates besides glycolysis. The main function of this enzyme is to provide reducing power (NADPH) and pentose phosphates for fatty acid and nucleic acid synthesis. The protein is Glucose-6-phosphate 1-dehydrogenase (gsdA) of Emericella nidulans (strain FGSC A4 / ATCC 38163 / CBS 112.46 / NRRL 194 / M139) (Aspergillus nidulans).